The following is a 338-amino-acid chain: DNA-directed RNA polymerase subunit alpha (338 aa).

Residues 1-225 (MLISQRPTIT…ELFGLARELN (225 aa)) form an alpha N-terminal domain (alpha-NTD) region. Residues 242 to 338 (YIAAYSMPIE…YIDVEAEDSE (97 aa)) form an alpha C-terminal domain (alpha-CTD) region. The tract at residues 319–338 (LEGYDAETGGYIDVEAEDSE) is disordered.

The protein belongs to the RNA polymerase alpha chain family. In terms of assembly, homodimer. The RNAP catalytic core consists of 2 alpha, 1 beta, 1 beta' and 1 omega subunit. When a sigma factor is associated with the core the holoenzyme is formed, which can initiate transcription.

The enzyme catalyses RNA(n) + a ribonucleoside 5'-triphosphate = RNA(n+1) + diphosphate. In terms of biological role, DNA-dependent RNA polymerase catalyzes the transcription of DNA into RNA using the four ribonucleoside triphosphates as substrates. The protein is DNA-directed RNA polymerase subunit alpha of Corynebacterium glutamicum (strain ATCC 13032 / DSM 20300 / JCM 1318 / BCRC 11384 / CCUG 27702 / LMG 3730 / NBRC 12168 / NCIMB 10025 / NRRL B-2784 / 534).